Consider the following 247-residue polypeptide: Probable transcriptional regulatory protein Dvul_0986 (247 aa).

Positions 1–22 (MAGHSKWANIQHRKGRQDAKRG) are disordered.

This sequence belongs to the TACO1 family.

The protein resides in the cytoplasm. The chain is Probable transcriptional regulatory protein Dvul_0986 from Nitratidesulfovibrio vulgaris (strain DP4) (Desulfovibrio vulgaris).